The sequence spans 230 residues: PKHD-type hydroxylase PD_1553 (230 aa).

One can recognise a Fe2OG dioxygenase domain in the interval 78–182; the sequence is RTLPPRFNRY…RIASFFWVQS (105 aa). The Fe cation site is built by H96, D98, and H163. R173 is a 2-oxoglutarate binding site.

Fe(2+) serves as cofactor. The cofactor is L-ascorbate.

This is PKHD-type hydroxylase PD_1553 from Xylella fastidiosa (strain Temecula1 / ATCC 700964).